Reading from the N-terminus, the 310-residue chain is Cytosolic Fe-S cluster assembly factor Nubp1 homolog (310 aa).

[4Fe-4S] cluster contacts are provided by Cys8, Cys22, Cys25, and Cys31. Position 62–69 (Gly62–Ser69) interacts with ATP. Residues Cys239 and Cys242 each coordinate [4Fe-4S] cluster.

It belongs to the Mrp/NBP35 ATP-binding proteins family. NUBP1/NBP35 subfamily. In terms of assembly, heterotetramer of 2 Nubp1 and 2 Nubp2 chains. It depends on [4Fe-4S] cluster as a cofactor.

The protein localises to the cytoplasm. Its function is as follows. Component of the cytosolic iron-sulfur (Fe/S) protein assembly (CIA) machinery. Required for maturation of extramitochondrial Fe-S proteins. The Nubp1-Nubp2 heterotetramer forms a Fe-S scaffold complex, mediating the de novo assembly of an Fe-S cluster and its transfer to target apoproteins. The sequence is that of Cytosolic Fe-S cluster assembly factor Nubp1 homolog from Drosophila willistoni (Fruit fly).